Here is a 287-residue protein sequence, read N- to C-terminus: MSEKHIDEFSGVETTGHEWDGIRELNNPMPRWWVWTFYATIVWALGYAIAYPAIPMITDATKGMLGFSSRAELQQNLDQAKASQTTLHDLIAAKTVHEIDSDSALREFAIAGGASAFKVNCATCHGSGASGGPGFPNLNDDDWLWGGDLDAIQATIAHGIRFDGDTDTHASEMPPFAEVLDPLQTRQVAAYVWGLTNTPSDPGLAEAGKQVFVDNCAACHGDDAKGKAEMGAPDLADAIWLKARGEDAIIRQVAAPKHGVMPAWAGRLGDTTVKELTIFVHSLGGGT.

At 1 to 36 the chain is on the cytoplasmic side; the sequence is MSEKHIDEFSGVETTGHEWDGIRELNNPMPRWWVWT. The chain crosses the membrane as a helical span at residues 37-57; it reads FYATIVWALGYAIAYPAIPMI. Over 58-287 the chain is Periplasmic; sequence TDATKGMLGF…IFVHSLGGGT (230 aa). 2 consecutive Cytochrome c domains span residues 108-196 and 203-284; these read FAIA…WGLT and GLAE…HSLG. Positions 121, 124, 125, 173, 216, 219, 220, and 261 each coordinate heme c.

This sequence belongs to the CcoP / FixP family. In terms of assembly, component of the cbb3-type cytochrome c oxidase at least composed of FixN, FixO, FixQ and FixP. Requires heme c as cofactor.

Its subcellular location is the cell inner membrane. It participates in energy metabolism; oxidative phosphorylation. In terms of biological role, C-type cytochrome. Part of the cbb3-type cytochrome c oxidase complex. FixP subunit is required for transferring electrons from donor cytochrome c via its heme groups to FixO subunit. From there, electrons are shuttled to the catalytic binuclear center of FixN subunit where oxygen reduction takes place. The complex also functions as a proton pump. The chain is Cbb3-type cytochrome c oxidase subunit FixPc from Rhizobium leguminosarum bv. viciae.